A 214-amino-acid chain; its full sequence is MILILLGPPGAGKGTQAKLLAAEYGVPHISTGDMFRDHKARGTELGKTVQAIMDAGGLVTDDITNEMVKDRLSRPDVAKGFILDGYPRTSAQAEYLDGLLASAGRAISRVLSYEVAEEAVVERISGRRSCPKCGAVYHVSANPPRRMGYCDRDDAGLVQRDDDKPENVKKRMAEYAAKTEPLKRFYSARGLLATVEGIGTPEGILAVTKRVLAS.

10-15 serves as a coordination point for ATP; that stretch reads GAGKGT. The tract at residues 30–59 is NMP; that stretch reads STGDMFRDHKARGTELGKTVQAIMDAGGLV. AMP contacts are provided by residues T31, R36, 57–59, 85–88, and Q92; these read GLV and GYPR. An LID region spans residues 126-163; that stretch reads GRRSCPKCGAVYHVSANPPRRMGYCDRDDAGLVQRDDD. R127 lines the ATP pocket. Positions 130 and 133 each coordinate Zn(2+). 136–137 serves as a coordination point for ATP; it reads VY. Zn(2+) is bound by residues C150 and D153. AMP-binding residues include R160 and R171. G199 lines the ATP pocket.

It belongs to the adenylate kinase family. As to quaternary structure, monomer.

Its subcellular location is the cytoplasm. It catalyses the reaction AMP + ATP = 2 ADP. It functions in the pathway purine metabolism; AMP biosynthesis via salvage pathway; AMP from ADP: step 1/1. Catalyzes the reversible transfer of the terminal phosphate group between ATP and AMP. Plays an important role in cellular energy homeostasis and in adenine nucleotide metabolism. This Anaeromyxobacter sp. (strain Fw109-5) protein is Adenylate kinase.